The chain runs to 704 residues: MYTDERQKELIKLTYEFLKLDAKKLTKEEAKKIVEDLREVIRFHDWRYYVLAQPVISDYEYDKLFKLLKDIEGKYPELITPDSPTQRVPSEITKVFPQVKHLTPMLSLDNSYNEADLRDFDRRVRELTGLDKVEYSVEPKFDGAGISLIYEKDLFVRGATRGDGEVGEEITNNLKVIKTIPLSAKFSQYGIDKVEIRGEVLIRKDLFKKMNEERLEEGLPLFANPRNAAAGSIRLQDPSEVAKRNLEAFVYQITYAEKDGKNLLGTVLKKHSDNIKMLHELGFKTPYPVMKVCIGIEEVIQYCEEWQRKRDAYPYEIDGMVIKVNDISLYDKLGFTSHHPRWAIAFKFKARQATTKIINVVFQVGRTGAITPVAKLEPVEIGGVIVSSVSLINEDFIREKDIRIGDTVLVERAGDVIPYVVMVIKEARTGNEKPIEFPKTCPSCGSPIVKPPGEAVYRCVNINCPAQVIERLIHFASKDAMDIKGLSEATIRKFYNLKLVRTIPDIYRLDYNLIKNIPGFGPKSVENLKNAIEESKKRPLYRLIYGLGIRYVGEVTAKTLASAVRCIDDLKNFTITDLMKLPDIGYKVASEIYNFFHNQENLKMIEELRELRVKTCHEEEEKKGKLAGLNFVFTGTLKCCSREKAKEIVESLGGNVLDTVSKKVHYLVVGEEPGSKLQKAQKLGTVKIINEEEFLKLIGGENTE.

Residues 58–62, 107–108, and Glu-138 each bind NAD(+); these read DYEYD and SL. The N6-AMP-lysine intermediate role is filled by Lys-140. 4 residues coordinate NAD(+): Arg-161, Glu-199, Lys-323, and Lys-347. Zn(2+) contacts are provided by Cys-441, Cys-444, Cys-459, and Cys-464. One can recognise a BRCT domain in the interval 621-704; the sequence is EKKGKLAGLN…LKLIGGENTE (84 aa).

Belongs to the NAD-dependent DNA ligase family. LigA subfamily. It depends on Mg(2+) as a cofactor. The cofactor is Mn(2+).

The catalysed reaction is NAD(+) + (deoxyribonucleotide)n-3'-hydroxyl + 5'-phospho-(deoxyribonucleotide)m = (deoxyribonucleotide)n+m + AMP + beta-nicotinamide D-nucleotide.. In terms of biological role, DNA ligase that catalyzes the formation of phosphodiester linkages between 5'-phosphoryl and 3'-hydroxyl groups in double-stranded DNA using NAD as a coenzyme and as the energy source for the reaction. It is essential for DNA replication and repair of damaged DNA. This Sulfurihydrogenibium sp. (strain YO3AOP1) protein is DNA ligase.